Consider the following 1020-residue polypeptide: Fanconi-associated nuclease 1 (1020 aa).

Residues 1-11 show a composition bias toward basic and acidic residues; that stretch reads MPSQRKSPDQK. Residues 1 to 24 form a disordered region; the sequence is MPSQRKSPDQKRPRRSLSTSKTAK. The D-box motif lies at 14-22; the sequence is RRSLSTSKT. Residues 41–69 form a UBZ4-type zinc finger; that stretch reads KLACSTCHKMVPRYDLIRHLDESCANNGV. The Zn(2+) site is built by cysteine 44, cysteine 47, histidine 59, and cysteine 64. Positions 173-208 are disordered; the sequence is KNEGLASQCPQTSPSTPGTSLTDNCPEMEDKDEVLN. The segment covering 180–195 has biased composition (polar residues); it reads QCPQTSPSTPGTSLTD. The KEN box signature appears at 212–214; that stretch reads KEN. A compositionally biased stretch (basic and acidic residues) spans 224–242; sequence ENASEQKVKNNKITGDESQ. Disordered stretches follow at residues 224–252 and 269–288; these read ENAS…PALT and LVSN…ESAR. Over residues 269 to 278 the composition is skewed to polar residues; sequence LVSNTKSSPG. The stretch at 673–737 forms a coiled coil; the sequence is SSRAVEVLER…AIRCIREGLA (65 aa). Mn(2+) is bound by residues glutamate 837, aspartate 963, glutamate 978, and valine 979. In terms of domain architecture, VRR-NUC spans 898 to 1010; that stretch reads AESLRAWVGE…GADVEVCHVV (113 aa).

Belongs to the FAN1 family. In terms of assembly, interacts with FANCD2 (when monoubiquitinated). Interacts with FANCI, MLH1, MLH3 and PMS2. Mn(2+) serves as cofactor. Requires Mg(2+) as cofactor. Ubiquitinated and degraded during mitotic exit by the APC/C-Cdh1 complex.

It localises to the nucleus. The enzyme catalyses Hydrolytically removes 5'-nucleotides successively from the 3'-hydroxy termini of 3'-hydroxy-terminated oligonucleotides.. Its function is as follows. Nuclease required for the repair of DNA interstrand cross-links (ICL) recruited at sites of DNA damage by monoubiquitinated FANCD2. Specifically involved in repair of ICL-induced DNA breaks by being required for efficient homologous recombination, probably in the resolution of homologous recombination intermediates. Not involved in DNA double-strand breaks resection. Acts as a 5'-3' exonuclease that anchors at a cut end of DNA and cleaves DNA successively at every third nucleotide, allowing to excise an ICL from one strand through flanking incisions. Probably keeps excising with 3'-flap annealing until it reaches and unhooks the ICL. Acts at sites that have a 5'-terminal phosphate anchor at a nick or a 1- or 2-nucleotide flap and is augmented by a 3' flap. Also has endonuclease activity toward 5'-flaps. The sequence is that of Fanconi-associated nuclease 1 from Mus musculus (Mouse).